The chain runs to 248 residues: 3-deoxy-manno-octulosonate cytidylyltransferase (248 aa).

This sequence belongs to the KdsB family.

It is found in the cytoplasm. The catalysed reaction is 3-deoxy-alpha-D-manno-oct-2-ulosonate + CTP = CMP-3-deoxy-beta-D-manno-octulosonate + diphosphate. Its pathway is nucleotide-sugar biosynthesis; CMP-3-deoxy-D-manno-octulosonate biosynthesis; CMP-3-deoxy-D-manno-octulosonate from 3-deoxy-D-manno-octulosonate and CTP: step 1/1. It participates in bacterial outer membrane biogenesis; lipopolysaccharide biosynthesis. Functionally, activates KDO (a required 8-carbon sugar) for incorporation into bacterial lipopolysaccharide in Gram-negative bacteria. This is 3-deoxy-manno-octulosonate cytidylyltransferase from Klebsiella pneumoniae subsp. pneumoniae (strain ATCC 700721 / MGH 78578).